The chain runs to 507 residues: ATP synthase subunit alpha, chloroplastic (507 aa).

An ATP-binding site is contributed by 170-177 (GDRQTGKT).

This sequence belongs to the ATPase alpha/beta chains family. F-type ATPases have 2 components, CF(1) - the catalytic core - and CF(0) - the membrane proton channel. CF(1) has five subunits: alpha(3), beta(3), gamma(1), delta(1), epsilon(1). CF(0) has four main subunits: a, b, b' and c.

The protein resides in the plastid. It localises to the chloroplast thylakoid membrane. The catalysed reaction is ATP + H2O + 4 H(+)(in) = ADP + phosphate + 5 H(+)(out). Functionally, produces ATP from ADP in the presence of a proton gradient across the membrane. The alpha chain is a regulatory subunit. The chain is ATP synthase subunit alpha, chloroplastic from Gossypium hirsutum (Upland cotton).